The chain runs to 226 residues: Ribosome maturation factor RimM (226 aa).

One can recognise a PRC barrel domain in the interval 144–225 (ADEFYWVDLI…RIVVDWEADY (82 aa)).

Belongs to the RimM family. As to quaternary structure, binds ribosomal protein uS19.

The protein localises to the cytoplasm. An accessory protein needed during the final step in the assembly of 30S ribosomal subunit, possibly for assembly of the head region. Essential for efficient processing of 16S rRNA. May be needed both before and after RbfA during the maturation of 16S rRNA. It has affinity for free ribosomal 30S subunits but not for 70S ribosomes. This Burkholderia ambifaria (strain ATCC BAA-244 / DSM 16087 / CCUG 44356 / LMG 19182 / AMMD) (Burkholderia cepacia (strain AMMD)) protein is Ribosome maturation factor RimM.